A 356-amino-acid chain; its full sequence is Ubiquitin-conjugating enzyme E2 Z (356 aa).

A compositionally biased stretch (low complexity) spans 1-16 (MAESPTEEAATATAGA). The tract at residues 1–22 (MAESPTEEAATATAGAGAAGPG) is disordered. One can recognise a UBC core domain in the interval 101 to 255 (QCLLRIKRDI…IRHETIRVAV (155 aa)). The active-site Glycyl thioester intermediate is the Cys-190. Positions 334-356 (NAEMDSDSSSSGTETDLHGSLRV) are disordered. Position 339 is a phosphoserine (Ser-339).

This sequence belongs to the ubiquitin-conjugating enzyme family.

The protein resides in the cytoplasm. The protein localises to the nucleus. It catalyses the reaction S-ubiquitinyl-[E1 ubiquitin-activating enzyme]-L-cysteine + [E2 ubiquitin-conjugating enzyme]-L-cysteine = [E1 ubiquitin-activating enzyme]-L-cysteine + S-ubiquitinyl-[E2 ubiquitin-conjugating enzyme]-L-cysteine.. It participates in protein modification; protein ubiquitination. Its function is as follows. Catalyzes the covalent attachment of ubiquitin to other proteins. Specific substrate for UBA6, not charged with ubiquitin by UBE1. May be involved in apoptosis regulation. This Rattus norvegicus (Rat) protein is Ubiquitin-conjugating enzyme E2 Z (Ube2z).